Reading from the N-terminus, the 1369-residue chain is Probable tegument protein antigen 3 (1369 aa).

The disordered stretch occupies residues Asp-1347 to Gln-1369.

Its subcellular location is the virion tegument. This is Probable tegument protein antigen 3 (3) from Connochaetes taurinus (Blue wildebeest).